The sequence spans 256 residues: 5-oxoprolinase subunit A (256 aa).

The protein belongs to the LamB/PxpA family. In terms of assembly, forms a complex composed of PxpA, PxpB and PxpC.

The catalysed reaction is 5-oxo-L-proline + ATP + 2 H2O = L-glutamate + ADP + phosphate + H(+). Its function is as follows. Catalyzes the cleavage of 5-oxoproline to form L-glutamate coupled to the hydrolysis of ATP to ADP and inorganic phosphate. The chain is 5-oxoprolinase subunit A from Cutibacterium acnes (strain DSM 16379 / KPA171202) (Propionibacterium acnes).